The primary structure comprises 154 residues: D-aminoacyl-tRNA deacylase (154 aa).

The Gly-cisPro motif, important for rejection of L-amino acids motif lies at 142-143; the sequence is GP.

This sequence belongs to the DTD family. As to quaternary structure, homodimer.

Its subcellular location is the cytoplasm. It catalyses the reaction glycyl-tRNA(Ala) + H2O = tRNA(Ala) + glycine + H(+). The catalysed reaction is a D-aminoacyl-tRNA + H2O = a tRNA + a D-alpha-amino acid + H(+). Functionally, an aminoacyl-tRNA editing enzyme that deacylates mischarged D-aminoacyl-tRNAs. Also deacylates mischarged glycyl-tRNA(Ala), protecting cells against glycine mischarging by AlaRS. Acts via tRNA-based rather than protein-based catalysis; rejects L-amino acids rather than detecting D-amino acids in the active site. By recycling D-aminoacyl-tRNA to D-amino acids and free tRNA molecules, this enzyme counteracts the toxicity associated with the formation of D-aminoacyl-tRNA entities in vivo and helps enforce protein L-homochirality. This is D-aminoacyl-tRNA deacylase from Polaromonas naphthalenivorans (strain CJ2).